A 662-amino-acid chain; its full sequence is Neurexin-2-beta (662 aa).

Residues 1-10 (MPPGGSGQGG) show a composition bias toward gly residues. A disordered region spans residues 1–27 (MPPGGSGQGGCPRRPPALAGPLPPPPP). The first 46 residues, 1–46 (MPPGGSGQGGCPRRPPALAGPLPPPPPPPPLPLLLGLLLLLGAAEG), serve as a signal peptide directing secretion. Residues 47 to 586 (ARVSSSLSTT…EVIRESSSTT (540 aa)) lie on the Extracellular side of the membrane. One can recognise a Laminin G-like domain in the interval 87–295 (TTYIFGKGGA…HLRLVGEGPS (209 aa)). The Ca(2+) site is built by Asp139 and Val156. Asn186 carries an N-linked (GlcNAc...) asparagine glycan. Positions 238 and 240 each coordinate Ca(2+). An O-linked (Xyl...) (heparan sulfate) serine glycan is attached at Ser350. 3 disordered regions span residues 408–458 (ATQD…LPPT), 476–496 (LLSPRKPAPRPNLRTDGATGA), and 530–557 (LGPGVPTAFEPRRPPPLRPGVTSVPGFP). Residues 587-607 (GMVVGIVAAAALCILILLYAM) traverse the membrane as a helical segment. Topologically, residues 608-662 (YKYRNRDEGSYQVDQSRNYISNSAQSNGAVVKEKAPAAPKTPSKAKKNKDKEYYV) are cytoplasmic. The segment at 629–662 (NSAQSNGAVVKEKAPAAPKTPSKAKKNKDKEYYV) is disordered.

This sequence belongs to the neurexin family. As to quaternary structure, interacts (via cytoplasmic C-terminal region) with CASK. Isoform Beta 4b binds alpha-dystroglycan and neuroligins NLGN1, NLGN2 and NLGN3. Interacts with CBLN1, CBLN2 and, less avidly, with CBLN4. Interacts with CLSTN3. Post-translationally, O-glycosylated; contains heparan sulfate. Heparan sulfate attachment is required for synapse development by mediating interactions with neuroligins. In terms of tissue distribution, brain (neuronal synapse).

The protein localises to the presynaptic cell membrane. Neuronal cell surface protein that may be involved in cell recognition and cell adhesion. The chain is Neurexin-2-beta (Nrxn2) from Rattus norvegicus (Rat).